A 107-amino-acid chain; its full sequence is Heme-degrading monooxygenase (107 aa).

One can recognise an ABM domain in the interval 2 to 93; it reads VIVANKTLIR…DYILGNEIEF (92 aa). Asn6 provides a ligand contact to Fe cation. Position 76 (His76) interacts with heme.

Belongs to the antibiotic biosynthesis monooxygenase family. Heme-degrading monooxygenase IsdG subfamily. Homodimer.

Its subcellular location is the cytoplasm. The catalysed reaction is heme b + 3 reduced [NADPH--hemoprotein reductase] + 3 O2 = biliverdin IXalpha + CO + Fe(2+) + 3 oxidized [NADPH--hemoprotein reductase] + 3 H2O + H(+). Allows bacterial pathogens to use the host heme as an iron source. Catalyzes the oxidative degradation of the heme macrocyclic porphyrin ring to the biliverdin in the presence of a suitable electron donor such as ascorbate or NADPH--cytochrome P450 reductase, with subsequent release of free iron. The chain is Heme-degrading monooxygenase from Shouchella clausii (strain KSM-K16) (Alkalihalobacillus clausii).